We begin with the raw amino-acid sequence, 332 residues long: Adenosine deaminase (332 aa).

Zn(2+) is bound by residues His12 and His14. Substrate is bound by residues His14, Asp16, and Gly170. His197 is a Zn(2+) binding site. Residue Glu200 is the Proton donor of the active site. Asp278 contributes to the Zn(2+) binding site.

This sequence belongs to the metallo-dependent hydrolases superfamily. Adenosine and AMP deaminases family. Adenosine deaminase subfamily. Zn(2+) is required as a cofactor.

The catalysed reaction is adenosine + H2O + H(+) = inosine + NH4(+). It catalyses the reaction 2'-deoxyadenosine + H2O + H(+) = 2'-deoxyinosine + NH4(+). Catalyzes the hydrolytic deamination of adenosine and 2-deoxyadenosine. The polypeptide is Adenosine deaminase (Clostridium perfringens (strain 13 / Type A)).